A 130-amino-acid chain; its full sequence is 3-aminoacrylate deaminase RutC (130 aa).

Belongs to the RutC family.

It carries out the reaction (Z)-3-aminoacrylate + H2O + H(+) = 3-oxopropanoate + NH4(+). Its function is as follows. Involved in pyrimidine catabolism. Catalyzes the deamination of 3-aminoacrylate to malonic semialdehyde, a reaction that can also occur spontaneously. RutC may facilitate the reaction and modulate the metabolic fitness, rather than catalyzing essential functions. The protein is 3-aminoacrylate deaminase RutC of Methylorubrum extorquens (strain CM4 / NCIMB 13688) (Methylobacterium extorquens).